Here is a 500-residue protein sequence, read N- to C-terminus: Hexose transporter 1 (500 aa).

At 1-25 the chain is on the cytoplasmic side; sequence MKNSNEISSSQSLKNNGSDGFFNTS. A helical transmembrane segment spans residues 26 to 46; that stretch reads LMYVLAACLASFLFGYQVSVL. The Extracellular segment spans residues 47 to 75; that stretch reads NTIKDFIVIEFGWCAGKEVNCDDSTLKSS. C60 and C67 are oxidised to a cystine. A helical membrane pass occupies residues 76-96; that stretch reads FLLASVFIGAVVGSGFSGFLV. Topologically, residues 97–101 are cytoplasmic; sequence QHGRR. Residues 102–122 form a helical membrane-spanning segment; that stretch reads FSLLVIYNFFILVSILTSITH. At 123–131 the chain is on the extracellular side; sequence HFHTILFSR. The helical transmembrane segment at 132–152 threads the bilayer; that stretch reads LLSGFGIGLITVSVPMYISEM. Over 153–166 the chain is Cytoplasmic; sequence THKDKKGAYGVLHQ. Q166 is a binding site for alpha-D-glucose. Q166 lines the beta-D-glucose pocket. The helical transmembrane segment at 167-187 threads the bilayer; the sequence is LFITFGIFIAVLLGMAMGNVP. The Extracellular segment spans residues 188–203; the sequence is EEVNNPLGTFQQIWWR. Residues 204-224 traverse the membrane as a helical segment; that stretch reads LMFFFPCIISILGIVLLTFFF. Residues 225 to 289 lie on the Cytoplasmic side of the membrane; sequence KEETPYYLFE…RAMKIPSYRY (65 aa). A helical membrane pass occupies residues 290–310; sequence VILLGCILSGLQQFTGINVLV. Q301, Q302, and N307 together coordinate alpha-D-glucose. Q301 contacts beta-D-glucose. N307 provides a ligand contact to beta-D-glucose. Residues 311–327 lie on the Extracellular side of the membrane; sequence SNSNALYKGFLTNEWIT. Residues 328–348 traverse the membrane as a helical segment; that stretch reads TLSVIMTVVNFLMTFPAIYIV. N337 contacts beta-D-glucose. Residues 349–356 lie on the Cytoplasmic side of the membrane; it reads EKLGRKTL. Residues 357 to 377 form a helical membrane-spanning segment; the sequence is LLCGCAGIVCAFLPTAIANLI. The Extracellular portion of the chain corresponds to 378–390; it reads NNTSDVVKKLSIS. A helical transmembrane segment spans residues 391–411; that stretch reads ATFVMIVSFAVSYGPVLWIYL. Residue W408 participates in alpha-D-glucose binding. The Cytoplasmic portion of the chain corresponds to 412-425; that stretch reads HEMFPSEIKDSAAS. A helical membrane pass occupies residues 426-446; sequence LASLVNWMCAIIVVFPSDIII. Topologically, residues 447-451 are extracellular; that stretch reads KQSPT. Residues 452 to 472 traverse the membrane as a helical segment; that stretch reads ILFFIFSGMSIVAFLFIFFFI. Residues 473-500 are Cytoplasmic-facing; the sequence is KETKGGEIGTSPYITLEERQKHMGKSVV.

Belongs to the major facilitator superfamily. Sugar transporter (TC 2.A.1.1) family. In terms of assembly, homodimer.

It is found in the cell membrane. The catalysed reaction is D-glucose(out) = D-glucose(in). The enzyme catalyses D-fructose(out) = D-fructose(in). It carries out the reaction D-galactose(in) = D-galactose(out). It catalyses the reaction D-mannose(out) = D-mannose(in). The catalysed reaction is D-glucosamine(out) = D-glucosamine(in). The enzyme catalyses D-xylose(out) = D-xylose(in). Inhibited by cytochalasin B. Its function is as follows. Sodium-independent facilitative hexose transporter. Can transport D-glucose and D-fructose. Can transport D-mannose, D-galactose, D-xylose and D-glucosamine. The sequence is that of Hexose transporter 1 from Plasmodium knowlesi.